A 441-amino-acid polypeptide reads, in one-letter code: Malate dehydrogenase [NADP], chloroplastic (441 aa).

The N-terminal 58 residues, 1 to 58 (MALTQLNSTCSKPQLHSSSQLSFLSRTRTRTLPRHYHSTFAPLHRTQHARISCSVAPN), are a transit peptide targeting the chloroplast. Cys76 and Cys81 are joined by a disulfide. Residue 105 to 111 (GAAGMIS) participates in NADP(+) binding. Substrate contacts are provided by Arg186 and Arg192. Position 199 (Asn199) interacts with NADP(+). Gln206 contributes to the NAD(+) binding site. 223–225 (VGN) is a binding site for NADP(+). 2 residues coordinate substrate: Asn225 and Arg256. Residue His281 is the Proton acceptor of the active site. A disulfide bridge connects residues Cys417 and Cys429.

The protein belongs to the LDH/MDH superfamily. MDH type 2 family. As to quaternary structure, homodimer.

The protein localises to the plastid. It localises to the chloroplast. The catalysed reaction is (S)-malate + NADP(+) = oxaloacetate + NADPH + H(+). Chloroplast NADP-MDH is activated upon illumination. In order to be enzymatically active, disulfide bridges on the protein must be reduced by thioredoxin which receives electrons from ferredoxin and the electron transport system of photosynthesis. Its function is as follows. The chloroplastic, NADP-dependent form is essential for the photosynthesis C4 cycle, which allows plants to circumvent the problem of photorespiration. In C4 plants, NADP-MDH activity acts to convert oxaloacetate to malate in chloroplasts of mesophyll cells for transport to the bundle sheath cells. The sequence is that of Malate dehydrogenase [NADP], chloroplastic from Pisum sativum (Garden pea).